A 358-amino-acid polypeptide reads, in one-letter code: Diels-Alderase phmD (358 aa).

The protein belongs to the Diels-Alderase family.

It functions in the pathway mycotoxin biosynthesis. Diels-Alderase; part of the gene cluster that mediates the biosynthesis of the mycotoxins phomacins, leucine-derived cytochalasans with potent actin polymerization-inhibitory activities and monocot-specific antigerminative activities. The first step in the pathway is catalyzed by the hybrid PKS-NRPS phmA, assisted by the enoyl reductase phmE, that are responsible for fusion of the leucine precursor and the polyketide backbone to produce a 2-pyrrolidone intermediate. The polyketide synthase module (PKS) of phmA is responsible for the synthesis of the polyketide backbone and the downstream nonribosomal peptide synthetase (NRPS) amidates the carboxyl end of the polyketide with the leucine precursor. Because phmA lacks a designated enoylreductase (ER) domain, the required activity is provided the enoyl reductase phmE. Reduction by the hydrolyase phmG, followed by dehydration and intra-molecular Diels-Alder cyclization by the Diels-Alderase phmD then yield the required isoindolone-fused macrocycle. A number of oxidative steps catalyzed by the tailoring cytochrome P450 monooxygenase phmB, the FAD-linked oxidoreductase phmC and the short-chain dehydrogenase/reductase phmF, are further required to afford the final products, phomacin D and phomacin E. This chain is Diels-Alderase phmD, found in Phaeosphaeria nodorum (strain SN15 / ATCC MYA-4574 / FGSC 10173) (Glume blotch fungus).